Here is a 225-residue protein sequence, read N- to C-terminus: Protein-L-isoaspartate O-methyltransferase (225 aa).

Residue Ser75 is part of the active site.

It belongs to the methyltransferase superfamily. L-isoaspartyl/D-aspartyl protein methyltransferase family.

It is found in the cytoplasm. The enzyme catalyses [protein]-L-isoaspartate + S-adenosyl-L-methionine = [protein]-L-isoaspartate alpha-methyl ester + S-adenosyl-L-homocysteine. Its function is as follows. Catalyzes the methyl esterification of L-isoaspartyl residues in peptides and proteins that result from spontaneous decomposition of normal L-aspartyl and L-asparaginyl residues. It plays a role in the repair and/or degradation of damaged proteins. This Xylella fastidiosa (strain 9a5c) protein is Protein-L-isoaspartate O-methyltransferase.